The sequence spans 449 residues: Phosphoglucosamine mutase (449 aa).

Serine 100 acts as the Phosphoserine intermediate in catalysis. Residues serine 100, aspartate 241, aspartate 243, and aspartate 245 each coordinate Mg(2+). Serine 100 is modified (phosphoserine).

The protein belongs to the phosphohexose mutase family. It depends on Mg(2+) as a cofactor. Post-translationally, activated by phosphorylation.

The enzyme catalyses alpha-D-glucosamine 1-phosphate = D-glucosamine 6-phosphate. Functionally, catalyzes the conversion of glucosamine-6-phosphate to glucosamine-1-phosphate. The sequence is that of Phosphoglucosamine mutase from Geobacillus kaustophilus (strain HTA426).